The sequence spans 399 residues: Fe-coproporphyrin III synthase (399 aa).

The region spanning 36-253 is the Radical SAM core domain; sequence KDKKPVVVWN…TRKLHEKGFP (218 aa). Cys50, Cys54, and Cys57 together coordinate [4Fe-4S] cluster.

Belongs to the radical SAM superfamily. [4Fe-4S] cluster serves as cofactor.

The catalysed reaction is 12,18-didecarboxysiroheme + 2 AH2 + 2 S-adenosyl-L-methionine = Fe-coproporphyrin III + 2 5'-deoxyadenosine + 2 L-methionine + 2 acetate + 2 A + 2 H(+). It participates in porphyrin-containing compound metabolism; protoheme biosynthesis. In terms of biological role, involved in siroheme-dependent heme b biosynthesis. Catalyzes the conversion of didecarboxysiroheme into Fe-coproporphyrin III by oxidative loss of two acetic acid side chains. The sequence is that of Fe-coproporphyrin III synthase from Methanosarcina barkeri (strain Fusaro / DSM 804).